We begin with the raw amino-acid sequence, 1170 residues long: Putative DNA topoisomerase 2, mitochondrial (1170 aa).

ATP is bound by residues asparagine 106, asparagine 135, 163–165, 176–183, and 396–398; these read SSN, GRNGYGAK, and QTK. The region spanning 475 to 590 is the Toprim domain; sequence CTLILTEGDS…SLVHTDGFIQ (116 aa). 3 residues coordinate Mg(2+): glutamate 481, aspartate 559, and aspartate 561. Residues 722–1157 enclose the Topo IIA-type catalytic domain; the sequence is IPSLIDGLKP…DWKSVWRSEL (436 aa). Residue tyrosine 813 is the O-(5'-phospho-DNA)-tyrosine intermediate of the active site.

The protein belongs to the type II topoisomerase family. In terms of assembly, homodimer. The cofactor is Mg(2+). Mn(2+) is required as a cofactor. Ca(2+) serves as cofactor.

It is found in the mitochondrion. The enzyme catalyses ATP-dependent breakage, passage and rejoining of double-stranded DNA.. Functionally, control of topological states of DNA by transient breakage and subsequent rejoining of DNA strands. Topoisomerase II makes double-strand breaks. This is Putative DNA topoisomerase 2, mitochondrial from Caenorhabditis elegans.